The following is a 1031-amino-acid chain: Pre-mRNA-splicing factor SYF1 (1031 aa).

4 HAT repeats span residues 28-60 (HLIP…NVKE), 90-122 (DGLQ…TRQS), 214-248 (KNGS…WAEI), and 250-269 (GGDA…PSLT). Residues 346–368 (VEEKVDGEQPQVEGQEQQPQEEP) form a disordered region. Residues 353 to 368 (EQPQVEGQEQQPQEEP) are compositionally biased toward low complexity. 8 HAT repeats span residues 452-487 (GEFE…FSET), 610-646 (PDLE…MELR), 664-698 (PKNT…LEES), 700-732 (GTVE…FLEE), 734-768 (KYFE…KFVK), 773-807 (KKLE…LEEE), 845-879 (FGLP…MERK), and 881-915 (GEID…FEIE). Disordered stretches follow at residues 948 to 969 (AAAS…QDAA) and 1003 to 1031 (TNAN…EDEF).

It belongs to the crooked-neck family. In terms of assembly, associated with the spliceosome.

Its subcellular location is the nucleus. Its function is as follows. Involved in pre-mRNA splicing and cell cycle progression. This Cryptococcus neoformans var. neoformans serotype D (strain B-3501A) (Filobasidiella neoformans) protein is Pre-mRNA-splicing factor SYF1 (SYF1).